A 199-amino-acid chain; its full sequence is Protein extra-macrochaetae (199 aa).

One can recognise a bHLH domain in the interval 23-75 (RIQRHPTHRGDGENAEMKMYLSKLKDLVPFMPKNRKLTKLEIIQHVIDYICDL). Ser106 bears the Phosphoserine mark. The disordered stretch occupies residues 127–199 (RLNAEQPAKV…QNAEKDSRQS (73 aa)). Positions 161–182 (QQHQQQQQLQLQQQQLQSQQQL) are enriched in low complexity.

In terms of assembly, heterodimer with other HLH proteins.

It is found in the nucleus. Functionally, participates in sensory organ patterning by antagonizing the neurogenic activity of the Achaete-scute complex (AS-C). It lacks a basic DNA-binding domain but is able to form heterodimers with other HLH proteins, thereby inhibiting DNA binding. May sequester proneural proteins in complexes inefficient for DNA interaction. EMC also affects vein differentiation. Inhibits the activity of AS-C proteins by forming an non-DNA binding heterodimer. The polypeptide is Protein extra-macrochaetae (emc) (Drosophila melanogaster (Fruit fly)).